A 278-amino-acid polypeptide reads, in one-letter code: Sulfate transport system permease protein CysT (278 aa).

Helical transmembrane passes span 22 to 42, 67 to 87, 102 to 122, 139 to 159, 188 to 208, 217 to 237, and 246 to 266; these read FTWV…FLKS, FGLS…IAWV, FIDL…ATVY, IAFT…PFVV, FWRV…AQGF, SVVI…VLIF, and AGAT…LFVI. An ABC transmembrane type-1 domain is found at 63 to 266; it reads YEVTFGLSLA…LFSLVILFVI (204 aa).

The protein belongs to the binding-protein-dependent transport system permease family. CysTW subfamily. The complex is composed of two ATP-binding proteins (CysA), two transmembrane proteins (CysT and CysW) and a solute-binding protein (CysP).

Its subcellular location is the cell inner membrane. Its function is as follows. Part of the ABC transporter complex CysAWTP (TC 3.A.1.6.1) involved in sulfate/thiosulfate import. Probably responsible for the translocation of the substrate across the membrane. The sequence is that of Sulfate transport system permease protein CysT (cysT) from Synechococcus elongatus (strain ATCC 33912 / PCC 7942 / FACHB-805) (Anacystis nidulans R2).